A 310-amino-acid polypeptide reads, in one-letter code: tRNA dimethylallyltransferase (310 aa).

Residue 14–21 (GPTASGKT) coordinates ATP. Position 16-21 (16-21 (TASGKT)) interacts with substrate. 3 interaction with substrate tRNA regions span residues 39 to 42 (DSAL), 163 to 167 (QRLSR), and 244 to 249 (RCVGYR).

It belongs to the IPP transferase family. In terms of assembly, monomer. The cofactor is Mg(2+).

It catalyses the reaction adenosine(37) in tRNA + dimethylallyl diphosphate = N(6)-dimethylallyladenosine(37) in tRNA + diphosphate. Catalyzes the transfer of a dimethylallyl group onto the adenine at position 37 in tRNAs that read codons beginning with uridine, leading to the formation of N6-(dimethylallyl)adenosine (i(6)A). The chain is tRNA dimethylallyltransferase from Aeromonas salmonicida (strain A449).